We begin with the raw amino-acid sequence, 104 residues long: MQKIRKGDKVIVLSGKDKGCSGEVIKVNPKENRAFVRGVNMIKRHQRQTQNQEAGIISKEAPIHLSNLAIADPKDGKPTRVGFRVNADGNKVRFAKRSGELING.

Belongs to the universal ribosomal protein uL24 family. In terms of assembly, part of the 50S ribosomal subunit.

Its function is as follows. One of two assembly initiator proteins, it binds directly to the 5'-end of the 23S rRNA, where it nucleates assembly of the 50S subunit. In terms of biological role, one of the proteins that surrounds the polypeptide exit tunnel on the outside of the subunit. The protein is Large ribosomal subunit protein uL24 of Bartonella henselae (strain ATCC 49882 / DSM 28221 / CCUG 30454 / Houston 1) (Rochalimaea henselae).